A 323-amino-acid polypeptide reads, in one-letter code: MKVNSKTLQSVKEDLLNIEQTLNKLIKVNNPILSAAAKHLLIVESKKIRPAIVLLVAKAIDKNKKIKTSQQRLAEVTEIIHTATLLHDDVVDESIIRRGTKSVNKTFGNKIAVFAGDFLFAQSSWYLANINNLEVVKAISKVITDLAEGELQQNLTQFNTYYSIIKYLEKSFNKTASLIAASCKSCCLLSDFDQSLNSKFYNYGKNLGLAFQIIDDILDITSSSTALGKMTTSDLKLGNLTAPVLFALTKNSKLFKIIEREFCEKSDISEAINIIKETNAIEESFDLAYEHIEAAINSIKDLPTSSEKDSLIEIAYDLLNRYK.

Isopentenyl diphosphate-binding residues include K46, R49, and H81. Residues D88 and D92 each contribute to the Mg(2+) site. R97 is a binding site for an all-trans-polyprenyl diphosphate. Isopentenyl diphosphate is bound at residue R98. Residues K174, T175, and Q212 each contribute to the an all-trans-polyprenyl diphosphate site.

The protein belongs to the FPP/GGPP synthase family. The cofactor is Mg(2+).

The protein localises to the plastid. It localises to the chloroplast. Possible role in synthesis of the nonaprenyl side chain of plastoquinone or in synthesis of other prenyl chains such as undekaprenyl pyrophosphate. This Cyanidium caldarium (Red alga) protein is Prenyl transferase (preA).